We begin with the raw amino-acid sequence, 311 residues long: Catechol 1,2-dioxygenase 1 (311 aa).

Residues Tyr-164, Tyr-200, His-224, and His-226 each contribute to the Fe cation site.

The protein belongs to the intradiol ring-cleavage dioxygenase family. As to quaternary structure, homodimer. Fe(3+) is required as a cofactor.

The catalysed reaction is catechol + O2 = cis,cis-muconate + 2 H(+). It functions in the pathway aromatic compound metabolism; beta-ketoadipate pathway; 5-oxo-4,5-dihydro-2-furylacetate from catechol: step 1/3. Functionally, can cleave 4-methyl-, 4-chloro-, and 3-methoxycatechol at lower rates than catechol, but has no activity with 4-nitrocatechol or protocatechuic acid. This chain is Catechol 1,2-dioxygenase 1 (catA1), found in Acinetobacter lwoffii.